The primary structure comprises 328 residues: GTPase Obg 2 (328 aa).

Positions 1–139 constitute an Obg domain; that stretch reads MSFRREKFIE…HCVLLKLKIV (139 aa). The OBG-type G domain maps to 140–309; that stretch reads SDVGIIGMPN…LHAQVKKAVV (170 aa). GTP-binding positions include 146–153, 171–175, 192–195, 259–262, and 290–292; these read GMPNAGKS, FTTLE, DIPG, NKCD, and GDE. Residues Ser153 and Thr173 each coordinate Mg(2+).

It belongs to the TRAFAC class OBG-HflX-like GTPase superfamily. OBG GTPase family. In terms of assembly, monomer. The cofactor is Mg(2+).

Its subcellular location is the cytoplasm. An essential GTPase which binds GTP, GDP and possibly (p)ppGpp with moderate affinity, with high nucleotide exchange rates and a fairly low GTP hydrolysis rate. Plays a role in control of the cell cycle, stress response, ribosome biogenesis and in those bacteria that undergo differentiation, in morphogenesis control. The chain is GTPase Obg 2 from Anaplasma marginale (strain St. Maries).